Reading from the N-terminus, the 787-residue chain is Phenylalanine--tRNA ligase beta subunit (787 aa).

Positions Ala39 to Arg149 constitute a tRNA-binding domain. The B5 domain occupies Pro400 to Asp475. The Mg(2+) site is built by Asp453, Asp459, Glu462, and Glu463. Positions Ser694–Arg786 constitute an FDX-ACB domain.

Belongs to the phenylalanyl-tRNA synthetase beta subunit family. Type 1 subfamily. As to quaternary structure, tetramer of two alpha and two beta subunits. Mg(2+) serves as cofactor.

It localises to the cytoplasm. The enzyme catalyses tRNA(Phe) + L-phenylalanine + ATP = L-phenylalanyl-tRNA(Phe) + AMP + diphosphate + H(+). This is Phenylalanine--tRNA ligase beta subunit (pheT) from Neisseria meningitidis serogroup A / serotype 4A (strain DSM 15465 / Z2491).